Consider the following 442-residue polypeptide: Ribosome biogenesis protein NOP53 (442 aa).

A disordered region spans residues 242–264; sequence KPSSNTNLKKIEDKTPRQAQKSV.

This sequence belongs to the NOP53 family.

Its subcellular location is the nucleus. It is found in the nucleolus. The protein localises to the nucleoplasm. Functionally, may play a role in ribosome biogenesis. This Arabidopsis thaliana (Mouse-ear cress) protein is Ribosome biogenesis protein NOP53.